The sequence spans 183 residues: Putative 3-methyladenine DNA glycosylase (183 aa).

It belongs to the DNA glycosylase MPG family.

The protein is Putative 3-methyladenine DNA glycosylase of Rickettsia africae (strain ESF-5).